The following is a 70-amino-acid chain: ATP synthase subunit epsilon, mitochondrial (70 aa).

This sequence belongs to the eukaryotic ATPase epsilon family. As to quaternary structure, F-type ATPases have 2 components, CF(1) - the catalytic core - and CF(0) - the membrane proton channel. CF(1) has five subunits: alpha(3), beta(3), gamma(1), delta(1), epsilon(1). CF(0) has three main subunits: a, b and c.

It localises to the mitochondrion. It is found in the mitochondrion inner membrane. Its function is as follows. Mitochondrial membrane ATP synthase (F(1)F(0) ATP synthase or Complex V) produces ATP from ADP in the presence of a proton gradient across the membrane which is generated by electron transport complexes of the respiratory chain. F-type ATPases consist of two structural domains, F(1) - containing the extramembraneous catalytic core, and F(0) - containing the membrane proton channel, linked together by a central stalk and a peripheral stalk. During catalysis, ATP synthesis in the catalytic domain of F(1) is coupled via a rotary mechanism of the central stalk subunits to proton translocation. Part of the complex F(1) domain and of the central stalk which is part of the complex rotary element. Rotation of the central stalk against the surrounding alpha(3)beta(3) subunits leads to hydrolysis of ATP in three separate catalytic sites on the beta subunits. This is ATP synthase subunit epsilon, mitochondrial from Zea mays (Maize).